The chain runs to 176 residues: ATP-dependent protease subunit HslV (176 aa).

The active site involves Thr6. Na(+) is bound by residues Gly161, Cys164, and Thr167.

Belongs to the peptidase T1B family. HslV subfamily. As to quaternary structure, a double ring-shaped homohexamer of HslV is capped on each side by a ring-shaped HslU homohexamer. The assembly of the HslU/HslV complex is dependent on binding of ATP.

It localises to the cytoplasm. The enzyme catalyses ATP-dependent cleavage of peptide bonds with broad specificity.. With respect to regulation, allosterically activated by HslU binding. Functionally, protease subunit of a proteasome-like degradation complex believed to be a general protein degrading machinery. This chain is ATP-dependent protease subunit HslV, found in Thermotoga sp. (strain RQ2).